A 244-amino-acid chain; its full sequence is DNA polymerase sliding clamp (244 aa).

Belongs to the PCNA family. In terms of assembly, homotrimer. The subunits circularize to form a toroid; DNA passes through its center. Replication factor C (RFC) is required to load the toroid on the DNA.

Its function is as follows. Sliding clamp subunit that acts as a moving platform for DNA processing. Responsible for tethering the catalytic subunit of DNA polymerase and other proteins to DNA during high-speed replication. This chain is DNA polymerase sliding clamp, found in Methanothrix thermoacetophila (strain DSM 6194 / JCM 14653 / NBRC 101360 / PT) (Methanosaeta thermophila).